The sequence spans 131 residues: D-ribose pyranase (131 aa).

The active-site Proton donor is His20. Residues Asp28, His98, and 120–122 (YAN) contribute to the substrate site.

The protein belongs to the RbsD / FucU family. RbsD subfamily. Homodecamer.

It localises to the cytoplasm. The catalysed reaction is beta-D-ribopyranose = beta-D-ribofuranose. The protein operates within carbohydrate metabolism; D-ribose degradation; D-ribose 5-phosphate from beta-D-ribopyranose: step 1/2. Functionally, catalyzes the interconversion of beta-pyran and beta-furan forms of D-ribose. In Bacillus cereus (strain ZK / E33L), this protein is D-ribose pyranase.